The sequence spans 870 residues: S-linalool synthase (870 aa).

The Mg(2+) site is built by Asp-547, Asp-551, Asn-689, Ser-693, and Glu-697. The short motif at 547–551 (DDFFD) is the DDXXD motif element.

This sequence belongs to the terpene synthase family. Mg(2+) serves as cofactor. The cofactor is Mn(2+). As to expression, highly expressed in cells of the transmitting tract of the stigma and style and in the epidermal cells of petals, as well as in stamens.

The enzyme catalyses (2E)-geranyl diphosphate + H2O = (S)-linalool + diphosphate. In terms of biological role, involved in the biosynthesis of the acyclic monoterpene S-linalool, a major component of the strong sweet scent of the C.breweri flowers. The polypeptide is S-linalool synthase (LIS) (Clarkia breweri (Fairy fans)).